Here is a 329-residue protein sequence, read N- to C-terminus: Transposable element Tc3 transposase (329 aa).

Residues 2 to 135 (PRGSALSDTE…LEFAKNNMGT (134 aa)) mediate DNA binding.

This sequence belongs to the transposase 5 family. In terms of assembly, homodimer or homotetramer.

Its subcellular location is the nucleus. Functionally, binds specifically to the terminal nucleotides of the TC3 inverted repeat. Its expression results in frequent excision and transposition of endogenous TC3 elements. TC3 transposase acts by making double strand breaks at the ends of TC3 element. The excised element would then be inserted into a target sequence. The protein is Transposable element Tc3 transposase (tc3a) of Caenorhabditis elegans.